Reading from the N-terminus, the 204-residue chain is Leucyl/phenylalanyl-tRNA--protein transferase (204 aa).

It belongs to the L/F-transferase family.

It is found in the cytoplasm. The catalysed reaction is N-terminal L-lysyl-[protein] + L-leucyl-tRNA(Leu) = N-terminal L-leucyl-L-lysyl-[protein] + tRNA(Leu) + H(+). It carries out the reaction N-terminal L-arginyl-[protein] + L-leucyl-tRNA(Leu) = N-terminal L-leucyl-L-arginyl-[protein] + tRNA(Leu) + H(+). The enzyme catalyses L-phenylalanyl-tRNA(Phe) + an N-terminal L-alpha-aminoacyl-[protein] = an N-terminal L-phenylalanyl-L-alpha-aminoacyl-[protein] + tRNA(Phe). Functionally, functions in the N-end rule pathway of protein degradation where it conjugates Leu, Phe and, less efficiently, Met from aminoacyl-tRNAs to the N-termini of proteins containing an N-terminal arginine or lysine. The sequence is that of Leucyl/phenylalanyl-tRNA--protein transferase from Agrobacterium fabrum (strain C58 / ATCC 33970) (Agrobacterium tumefaciens (strain C58)).